The sequence spans 852 residues: Disease resistance RPP13-like protein 4 (852 aa).

Residues 17-68 (LEEKGRTVSDYRKQLEDLQSELKYMQSFLKDAERQKRTNETLRTLVADLREL) adopt a coiled-coil conformation. ADP is bound by residues Arg-149, Val-161, 189–196 (GMGGLGKT), Arg-297, and Lys-363. In terms of domain architecture, NB-ARC spans 164–410 (EGDKRKIKEW…MSSLQLSYDE (247 aa)). LRR repeat units follow at residues 558–581 (CKYLRVLDISKSIFDAPLSEILDE), 585–609 (LQHLACLSLSNTHPLIQFPRSMEDL), 633–657 (FKKLLVLDMTNCGSLECFPKGIGSL), 683–706 (LTNLRKLGLSLTRGDQIEEEELDS), 763–786 (LPMLRYMSICSGNLVKMQEPFWGN), and 798–824 (LSSLSDLDMDWEVLQQSMPYLRTVTAN).

Belongs to the disease resistance NB-LRR family. RPP13 subfamily. In terms of assembly, interacts with ZED1/ZRK5. Component of a stable high-order oligomeric complex made of RKS1 and RPP13L4/ZAR1 which recruits ZED1-related kinases (e.g. uridylylated PBL2 and acetylated ZED1/ZRK5) in the presence of ATP and pathogenic bacteria type III secreted effector (T3SE) proteins (e.g. Pseudomonas syringae HopZ1a and HopF2a and Xanthomonas campestris pv. campestris (Xcc) XopAC/AvrAC) to form a wheel-like pentameric resistosome; this complex triggers immunity toward pathogenic bacteria (e.g. X.campestris and P.syringae), especially in vascular tissues. Interacts with RKS1, ZED1/ZRK5, ZRK3, ZRK6 and ZRK15.

It localises to the cell membrane. Its subcellular location is the nucleus. Exhibits autoinhibition activity. Its function is as follows. CC-NB-LRR receptor-like protein required for recognition of pathogenic bacteria type III effectors (T3E) such as Pseudomonas syringae HopZ1a and HopF2a and Xanthomonas campestris pv. campestris (Xcc) XopAC/AvrAC; this recognition requires ZED1-related kinases (e.g. PBL2, ZRK3 and ZED1/ZRK5). Confers allele-specific recognition and virulence attenuation of HopZ1a. Immunity mediated by RPP13L4/ZAR1 is independent of several genes required by other resistance protein signaling pathways such as NDR1 and RAR1. Together with ZED1/ZRK5, involved in the regulation of the ambient temperature-sensitive intersection of growth and immune response in the absence of pathogens. The chain is Disease resistance RPP13-like protein 4 (RPP13L4) from Arabidopsis thaliana (Mouse-ear cress).